A 236-amino-acid chain; its full sequence is MEASDWQGGEGDKPLEKVGSVPCLERSSSTVPTGDALVRHAKGLSQDTFKICKEYLRPLKKFLRKLNLPKDLPQKKRIKYTKQSLEALGGHINTFLQHYCRAWEIKHWKKMLWRFVSLFSELEAKQLRRLYKYTKTNQTAKFLAALCPLDAPERSLLANQEDCLPRLCSAWGLHGNISGMKERLSKMQAPGQEVVMLEEPRSSHCSRGDSLRKLPQKPKLKKKRIKERLESPKSCS.

Positions Met-1 to Ser-29 are disordered. The interval Leu-44 to Ala-145 is CHD1 helical C-terminal domain (CHCT). A disordered region spans residues Leu-197 to Ser-236. Over residues Glu-198–Arg-212 the composition is skewed to basic and acidic residues. The span at Leu-214–Lys-226 shows a compositional bias: basic residues. The span at Glu-227–Ser-236 shows a compositional bias: basic and acidic residues.

As to expression, exclusively expressed in testes.

It localises to the cytoplasm. It is found in the nucleus. In terms of biological role, may play a role in regulation of apoptosis. The protein is CHD1 helical C-terminal domain containing protein 1 (Chct1) of Mus musculus (Mouse).